The sequence spans 270 residues: Ribonuclease HII (270 aa).

The 195-residue stretch at 28–222 folds into the RNase H type-2 domain; the sequence is RQVAGADEAG…VSGRQGAPPR (195 aa). A divalent metal cation contacts are provided by D34, E35, and D128.

The protein belongs to the RNase HII family. Requires Mn(2+) as cofactor. Mg(2+) serves as cofactor.

Its subcellular location is the cytoplasm. The enzyme catalyses Endonucleolytic cleavage to 5'-phosphomonoester.. In terms of biological role, endonuclease that specifically degrades the RNA of RNA-DNA hybrids. The protein is Ribonuclease HII of Salinispora tropica (strain ATCC BAA-916 / DSM 44818 / JCM 13857 / NBRC 105044 / CNB-440).